We begin with the raw amino-acid sequence, 433 residues long: Staphylopine synthase (433 aa).

NADP(+)-binding positions include 9 to 12 (TGPV), Arg-33, 37 to 40 (SEKS), and Asp-99. The active-site Proton donor/acceptor is His-216.

The protein belongs to the staphylopine dehydrogenase family. In terms of assembly, homodimer.

The catalysed reaction is staphylopine + NADP(+) + H2O = (2S)-2-amino-4-{[(1R)-1-carboxy-2-(1H-imidazol-4-yl)ethyl]amino}butanoate + pyruvate + NADPH + H(+). Functionally, catalyzes the NADPH-dependent reductive condensation of pyruvate to the intermediate formed by the adjacently encoded enzyme CntL, namely (2S)-2-amino-4-{[(1R)-1-carboxy-2-(1H-imidazol-4-yl)ethyl]amino}butanoate, leading to the production of staphylopine. This is the last step in the biosynthesis of the metallophore staphylopine, which is involved in the acquisition of nickel, cobalt, zinc, copper, and iron, and thus enables bacterial growth inside the host, where metal access is limited. Therefore, this enzyme probably contributes to staphylococcal virulence. Can use neither NADH nor alpha-ketoglutarate in place of NADPH and pyruvate, respectively. This is Staphylopine synthase from Staphylococcus aureus (strain Mu50 / ATCC 700699).